Consider the following 274-residue polypeptide: Cell division protein FtsQ (274 aa).

The interval 1-24 is disordered; sequence MRDLHAKKQRVPHNRVKKPPKERK. Residues 1–33 lie on the Cytoplasmic side of the membrane; that stretch reads MRDLHAKKQRVPHNRVKKPPKERKPINWGPILK. Basic residues predominate over residues 7–21; the sequence is KKQRVPHNRVKKPPK. The helical transmembrane segment at 34–56 threads the bilayer; the sequence is FASRGFGGAALCAGLGFGGWQLY. Over 57–274 the chain is Periplasmic; sequence NLVSRTTLLR…YADKIIVKKV (218 aa). The POTRA domain maps to 65–133; sequence LRLEAIEVSP…HTLSITVSER (69 aa).

The protein belongs to the FtsQ/DivIB family. FtsQ subfamily.

Its subcellular location is the cell inner membrane. Essential cell division protein. The protein is Cell division protein FtsQ of Geobacter sp. (strain M21).